Reading from the N-terminus, the 366-residue chain is DNA integrity scanning protein DisA (366 aa).

A DAC domain is found at 21–159 (VHTLKGTLQR…EGKSHMLEQP (139 aa)). ATP is bound by residues Gly-88, Leu-106, and 119 to 123 (TRHRS).

The protein belongs to the DisA family. As to quaternary structure, homooctamer. It depends on Mg(2+) as a cofactor.

It carries out the reaction 2 ATP = 3',3'-c-di-AMP + 2 diphosphate. Participates in a DNA-damage check-point. DisA forms globular foci that rapidly scan along the chromosomes searching for lesions. Functionally, also has diadenylate cyclase activity, catalyzing the condensation of 2 ATP molecules into cyclic di-AMP (c-di-AMP). c-di-AMP likely acts as a signaling molecule that may couple DNA integrity with a cellular process. The sequence is that of DNA integrity scanning protein DisA from Corynebacterium glutamicum (strain ATCC 13032 / DSM 20300 / JCM 1318 / BCRC 11384 / CCUG 27702 / LMG 3730 / NBRC 12168 / NCIMB 10025 / NRRL B-2784 / 534).